Reading from the N-terminus, the 300-residue chain is Acetylglutamate kinase (300 aa).

Residues 73–74 (GG), R95, and N197 each bind substrate.

The protein belongs to the acetylglutamate kinase family. ArgB subfamily.

The protein resides in the cytoplasm. It carries out the reaction N-acetyl-L-glutamate + ATP = N-acetyl-L-glutamyl 5-phosphate + ADP. It participates in amino-acid biosynthesis; L-arginine biosynthesis; N(2)-acetyl-L-ornithine from L-glutamate: step 2/4. In terms of biological role, catalyzes the ATP-dependent phosphorylation of N-acetyl-L-glutamate. This chain is Acetylglutamate kinase, found in Bordetella avium (strain 197N).